A 155-amino-acid chain; its full sequence is RNA pyrophosphohydrolase (155 aa).

The region spanning 5–147 is the Nudix hydrolase domain; sequence KYRPNVAAII…KRQVYRQVIA (143 aa). The Nudix box motif lies at 42–63; the sequence is GGIDEGETPLEALHRELLEEIG.

Belongs to the Nudix hydrolase family. RppH subfamily. Requires a divalent metal cation as cofactor.

Functionally, accelerates the degradation of transcripts by removing pyrophosphate from the 5'-end of triphosphorylated RNA, leading to a more labile monophosphorylated state that can stimulate subsequent ribonuclease cleavage. The protein is RNA pyrophosphohydrolase of Helicobacter pylori (strain HPAG1).